The chain runs to 261 residues: Small ribosomal subunit protein uS2 (261 aa).

This sequence belongs to the universal ribosomal protein uS2 family.

The sequence is that of Small ribosomal subunit protein uS2 from Streptococcus mutans serotype c (strain ATCC 700610 / UA159).